Reading from the N-terminus, the 529-residue chain is Type I inositol polyphosphate 5-phosphatase 5 (529 aa).

2 catalytic regions span residues 371–386 (DRVL…VALT) and 451–466 (KRRT…WKGE).

Belongs to the inositol polyphosphate 5-phosphatase family.

Its function is as follows. May be involved in the regulation of root hairs development. Required for restricting both the size of the root-hair initiation site and the width of the root hairs during the transition to tip growth, but is not required for normal subsequent tip growth. The protein is Type I inositol polyphosphate 5-phosphatase 5 of Arabidopsis thaliana (Mouse-ear cress).